Consider the following 213-residue polypeptide: GTP cyclohydrolase 1 (213 aa).

Zn(2+) contacts are provided by Cys104, His107, and Cys175.

Belongs to the GTP cyclohydrolase I family. As to quaternary structure, toroid-shaped homodecamer, composed of two pentamers of five dimers.

The catalysed reaction is GTP + H2O = 7,8-dihydroneopterin 3'-triphosphate + formate + H(+). Its pathway is cofactor biosynthesis; 7,8-dihydroneopterin triphosphate biosynthesis; 7,8-dihydroneopterin triphosphate from GTP: step 1/1. The polypeptide is GTP cyclohydrolase 1 (Brucella anthropi (strain ATCC 49188 / DSM 6882 / CCUG 24695 / JCM 21032 / LMG 3331 / NBRC 15819 / NCTC 12168 / Alc 37) (Ochrobactrum anthropi)).